The sequence spans 170 residues: Peptide deformylase 1 (170 aa).

C91 and H133 together coordinate Fe cation. The active site involves E134. Residue H137 coordinates Fe cation.

The protein belongs to the polypeptide deformylase family. It depends on Fe(2+) as a cofactor.

The catalysed reaction is N-terminal N-formyl-L-methionyl-[peptide] + H2O = N-terminal L-methionyl-[peptide] + formate. In terms of biological role, removes the formyl group from the N-terminal Met of newly synthesized proteins. Requires at least a dipeptide for an efficient rate of reaction. N-terminal L-methionine is a prerequisite for activity but the enzyme has broad specificity at other positions. The chain is Peptide deformylase 1 from Vibrio vulnificus (strain CMCP6).